We begin with the raw amino-acid sequence, 143 residues long: Ribosome maturation factor RimP (143 aa).

Belongs to the RimP family.

It is found in the cytoplasm. In terms of biological role, required for maturation of 30S ribosomal subunits. The sequence is that of Ribosome maturation factor RimP from Neisseria gonorrhoeae (strain ATCC 700825 / FA 1090).